The chain runs to 48 residues: ATP synthase protein 8 (48 aa).

Residues Leu-4–Leu-24 form a helical membrane-spanning segment.

It belongs to the ATPase protein 8 family. F-type ATPases have 2 components, CF(1) - the catalytic core - and CF(0) - the membrane proton channel.

It localises to the mitochondrion membrane. Functionally, mitochondrial membrane ATP synthase (F(1)F(0) ATP synthase or Complex V) produces ATP from ADP in the presence of a proton gradient across the membrane which is generated by electron transport complexes of the respiratory chain. F-type ATPases consist of two structural domains, F(1) - containing the extramembraneous catalytic core and F(0) - containing the membrane proton channel, linked together by a central stalk and a peripheral stalk. During catalysis, ATP synthesis in the catalytic domain of F(1) is coupled via a rotary mechanism of the central stalk subunits to proton translocation. Part of the complex F(0) domain. Minor subunit located with subunit a in the membrane. This is ATP synthase protein 8 (atp8) from Schizosaccharomyces pombe (strain 972 / ATCC 24843) (Fission yeast).